We begin with the raw amino-acid sequence, 209 residues long: Thymidine kinase (209 aa).

Residues 25–32 and 103–106 contribute to the ATP site; these read GCMFAGKT and DEVQ. The active-site Proton acceptor is Glu104. Positions 160, 163, 198, and 201 each coordinate Zn(2+).

It belongs to the thymidine kinase family. In terms of assembly, homotetramer.

It localises to the cytoplasm. It carries out the reaction thymidine + ATP = dTMP + ADP + H(+). The polypeptide is Thymidine kinase (Mycoplasma capricolum subsp. capricolum (strain California kid / ATCC 27343 / NCTC 10154)).